A 110-amino-acid polypeptide reads, in one-letter code: uncharacterized protein (110 aa).

Residues 1-19 form the signal peptide; it reads MKYLVGCLCLAAICLSAGA. Asn-101 is a glycosylation site (N-linked (GlcNAc...) asparagine).

Component of the acid-soluble and acid-insoluble organic matrix of prismatic shell layers (at protein level).

It is found in the secreted. This is an uncharacterized protein from Haliotis asinina (Donkey's ear abalone).